We begin with the raw amino-acid sequence, 198 residues long: Hookworm platelet inhibitor 1 (198 aa).

The signal sequence occupies residues 1–17 (MSSYLLVLVAILGFAYA). 5 disulfide bridges follow: C24–C65, C78–C146, C141–C154, C174–C186, and C177–C195.

The protein belongs to the CRISP family. Monomer. As to expression, detected in cephalic glands.

The protein resides in the secreted. Its function is as follows. Hookworms inhibitor of platelet aggregation and adhesion. Native protein inhibits platelet aggregation induced by ADP, epinephrine, and thrombin. In addition, it prevents adhesion of resting platelets to immobilized fibrinogen and collagen. May act by binding to glycoprotein IIb/IIIa (ITGA2B/ITGB3) and integrin alpha-2/beta-1 (ITGA1/ITGB1), respectively. It is noteworthy that the recombinant protein fails to inhibit binding to fibrinogen (through ITGA2B/ITGB3) and collagen (through ITGA1/ITGB1). The chain is Hookworm platelet inhibitor 1 from Ancylostoma caninum (Dog hookworm).